The following is a 450-amino-acid chain: FAD-linked oxidoreductase ptmO (450 aa).

The FAD-binding PCMH-type domain maps to Pro-32–Ala-203.

Belongs to the oxygen-dependent FAD-linked oxidoreductase family. FAD serves as cofactor.

It participates in secondary metabolite biosynthesis. Its function is as follows. FAD-linked oxidoreductase; part of the gene cluster that mediates the biosynthesis of the indole diterpenes penitrems. The geranylgeranyl diphosphate (GGPP) synthase ptmG catalyzes the first step in penitrem biosynthesis via conversion of farnesyl pyrophosphate and isopentyl pyrophosphate into geranylgeranyl pyrophosphate (GGPP). Condensation of indole-3-glycerol phosphate with GGPP by the prenyl transferase ptmC then forms 3-geranylgeranylindole (3-GGI). Epoxidation by the FAD-dependent monooxygenase ptmM leads to a epoxidized-GGI that is substrate of the terpene cyclase ptmB for cyclization to yield paspaline. Paspaline is subsequently converted to 13-desoxypaxilline by the cytochrome P450 monooxygenase ptmP, the latter being then converted to paxilline by the cytochrome P450 monooxygenase ptmQ. Paxilline is converted to beta-paxitriol via C-10 ketoreduction by the short-chain dehydrogenase ptmH which can be monoprenylated at the C-20 by the indole diterpene prenyltransferase ptmD. A two-step elimination (acetylation and elimination) process performed by the O-acetyltransferase ptmV and ptmI leads to the production of the prenylated form of penijanthine. The FAD-linked oxidoreductase ptmO then converts the prenylated form of penijanthine into PC-M5 which is in turn transformed into PC-M4 by the aromatic dimethylallyltransferase ptmE. Five sequential oxidative transformations performed by the cytochrome P450 monooxygenases ptmK, ptmU, ptmL, ptmN and ptmJ yield the various penitrem compounds. PtmK, ptmU and ptmM are involved in the formation of the key bicyclic ring of penitrem C via the formation of the intermediates secopenitrem D and penitrem D. PtmL catalyzes the epoxidation of penitrem D and C to yield penitrem B and F, respectively. PtmJ catalyzes the last benzylic hydroxylation to convert penitrem B to prenitrem E and penitrem F to penitrem A. The polypeptide is FAD-linked oxidoreductase ptmO (Penicillium ochrochloron).